We begin with the raw amino-acid sequence, 95 residues long: UPF0235 protein AnaeK_1146 (95 aa).

It belongs to the UPF0235 family.

This chain is UPF0235 protein AnaeK_1146, found in Anaeromyxobacter sp. (strain K).